The primary structure comprises 230 residues: Fibrillarin-like rRNA/tRNA 2'-O-methyltransferase (230 aa).

S-adenosyl-L-methionine is bound by residues 87–88 (TT), 105–106 (EF), 130–131 (DA), and 150–153 (DVAQ).

It belongs to the methyltransferase superfamily. Fibrillarin family. As to quaternary structure, interacts with nop5. Component of box C/D small ribonucleoprotein (sRNP) particles that contain rpl7ae, FlpA and nop5, plus a guide RNA.

Involved in pre-rRNA and tRNA processing. Utilizes the methyl donor S-adenosyl-L-methionine to catalyze the site-specific 2'-hydroxyl methylation of ribose moieties in rRNA and tRNA. Site specificity is provided by a guide RNA that base pairs with the substrate. Methylation occurs at a characteristic distance from the sequence involved in base pairing with the guide RNA. In Methanococcus vannielii (strain ATCC 35089 / DSM 1224 / JCM 13029 / OCM 148 / SB), this protein is Fibrillarin-like rRNA/tRNA 2'-O-methyltransferase.